A 251-amino-acid chain; its full sequence is Hydroxyacylglutathione hydrolase (251 aa).

H53, H55, D57, H58, H110, D127, and H165 together coordinate Zn(2+).

It belongs to the metallo-beta-lactamase superfamily. Glyoxalase II family. In terms of assembly, monomer. It depends on Zn(2+) as a cofactor.

The catalysed reaction is an S-(2-hydroxyacyl)glutathione + H2O = a 2-hydroxy carboxylate + glutathione + H(+). It functions in the pathway secondary metabolite metabolism; methylglyoxal degradation; (R)-lactate from methylglyoxal: step 2/2. Thiolesterase that catalyzes the hydrolysis of S-D-lactoyl-glutathione to form glutathione and D-lactic acid. This Buchnera aphidicola subsp. Acyrthosiphon pisum (strain APS) (Acyrthosiphon pisum symbiotic bacterium) protein is Hydroxyacylglutathione hydrolase.